Here is a 173-residue protein sequence, read N- to C-terminus: Peptide deformylase (173 aa).

2 residues coordinate Fe cation: cysteine 91 and histidine 133. Residue glutamate 134 is part of the active site. Histidine 137 is a Fe cation binding site.

It belongs to the polypeptide deformylase family. The cofactor is Fe(2+).

The enzyme catalyses N-terminal N-formyl-L-methionyl-[peptide] + H2O = N-terminal L-methionyl-[peptide] + formate. Removes the formyl group from the N-terminal Met of newly synthesized proteins. Requires at least a dipeptide for an efficient rate of reaction. N-terminal L-methionine is a prerequisite for activity but the enzyme has broad specificity at other positions. The chain is Peptide deformylase from Blochmanniella pennsylvanica (strain BPEN).